Reading from the N-terminus, the 481-residue chain is 3-ketoacyl-CoA synthase 8 (481 aa).

The next 2 helical transmembrane spans lie at 4-24 (LKMV…AMKG) and 44-64 (LQTI…YMLT). In terms of domain architecture, FAE spans 61–358 (YMLTRPKPVY…FFITFVKKKY (298 aa)). Active-site residues include Cys213, His292, His376, His380, His409, and Asn413.

It belongs to the thiolase-like superfamily. Chalcone/stilbene synthases family. In terms of tissue distribution, expressed in leaves and seedlings.

Its subcellular location is the endoplasmic reticulum membrane. It catalyses the reaction a very-long-chain acyl-CoA + malonyl-CoA + H(+) = a very-long-chain 3-oxoacyl-CoA + CO2 + CoA. It functions in the pathway lipid metabolism; fatty acid biosynthesis. The sequence is that of 3-ketoacyl-CoA synthase 8 from Arabidopsis thaliana (Mouse-ear cress).